Consider the following 101-residue polypeptide: Protein S100-A7-like 2 (101 aa).

2 consecutive EF-hand domains span residues 13-48 (IVAM…SGCE) and 50-85 (SDMD…ITID). Ca(2+)-binding residues include aspartate 63, asparagine 65, aspartate 67, lysine 69, and glutamate 74. Histidine 87 and histidine 91 together coordinate Zn(2+).

It belongs to the S-100 family.

The sequence is that of Protein S100-A7-like 2 (S100A7L2) from Homo sapiens (Human).